The following is a 69-amino-acid chain: DNA gyrase inhibitor YacG (69 aa).

Cys-7, Cys-10, Cys-26, and Cys-30 together coordinate Zn(2+).

Belongs to the DNA gyrase inhibitor YacG family. In terms of assembly, interacts with GyrB. It depends on Zn(2+) as a cofactor.

Its function is as follows. Inhibits all the catalytic activities of DNA gyrase by preventing its interaction with DNA. Acts by binding directly to the C-terminal domain of GyrB, which probably disrupts DNA binding by the gyrase. The sequence is that of DNA gyrase inhibitor YacG from Shewanella sp. (strain W3-18-1).